The primary structure comprises 486 residues: Stretch-activated cation channel yam8 (486 aa).

The N-terminal stretch at 1–24 (MFFFSTHLILKILFFWSITRNIFG) is a signal peptide. Over 25–464 (ATYTSLLLNN…PGVEFYESGS (440 aa)) the chain is Extracellular. Residues asparagine 33, asparagine 49, asparagine 59, asparagine 82, and asparagine 93 are each glycosylated (N-linked (GlcNAc...) asparagine). The chain crosses the membrane as a helical span at residues 465–485 (ALLNISWRTFFISLIFWILFV). Glutamate 486 is a topological domain (cytoplasmic).

Its subcellular location is the cell membrane. In terms of biological role, calcium-permeable, cation-selective stretch-activated channel (SAC) that functions together with CCH1 to mediate calcium entry into cells. Required during mating. The polypeptide is Stretch-activated cation channel yam8 (Schizosaccharomyces pombe (strain 972 / ATCC 24843) (Fission yeast)).